The following is a 268-amino-acid chain: Indole-3-glycerol phosphate synthase (268 aa).

It belongs to the TrpC family.

It carries out the reaction 1-(2-carboxyphenylamino)-1-deoxy-D-ribulose 5-phosphate + H(+) = (1S,2R)-1-C-(indol-3-yl)glycerol 3-phosphate + CO2 + H2O. Its pathway is amino-acid biosynthesis; L-tryptophan biosynthesis; L-tryptophan from chorismate: step 4/5. This chain is Indole-3-glycerol phosphate synthase, found in Acinetobacter baumannii (strain SDF).